A 794-amino-acid polypeptide reads, in one-letter code: PAN2-PAN3 deadenylation complex subunit PAN3 (794 aa).

The C3H1-type zinc finger occupies 7 to 36 (SAKDVLCKNILIYGYCKFQDKGCAFSHNKQ). Disordered stretches follow at residues 40 to 97 (PQQQ…TQSK) and 187 to 226 (AQVGNNPGSTAPANLQLQQKQPQQPQQPQQPQQHQQQQQL). Polar residues-rich tracts occupy residues 83–94 (IQSNGMVNSQET) and 189–199 (VGNNPGSTAPA). The segment covering 200 to 226 (NLQLQQKQPQQPQQPQQPQQHQQQQQL) has biased composition (low complexity). The pseudokinase domain stretch occupies residues 372–668 (QTMQHLSLPD…MDQFILQYIS (297 aa)). Residues R425 and 494–501 (DYYPNLTT) each bind ATP. Residues 669–707 (SHFMTLMNKLQNSHDWVELQLSTELENARLFRLMTKINF) are a coiled coil. Residues 708–794 (IISEMPTYDL…IDTQFRLLRG (87 aa)) form a knob domain region.

Belongs to the protein kinase superfamily. PAN3 family. Homodimer. Forms a heterotrimer with a catalytic subunit PAN2 to form the poly(A)-nuclease (PAN) deadenylation complex. Interacts (via PAM-2 motif) with poly(A)-binding protein PAB1 (via PABC domain), conferring substrate specificity of the enzyme complex.

The protein resides in the cytoplasm. Regulatory subunit of the poly(A)-nuclease (PAN) deadenylation complex, one of two cytoplasmic mRNA deadenylases involved in mRNA turnover. PAN specifically shortens poly(A) tails of RNA and the activity is stimulated by poly(A)-binding protein PAB1. PAN deadenylation is followed by rapid degradation of the shortened mRNA tails by the CCR4-NOT complex. Deadenylated mRNAs are then degraded by two alternative mechanisms, namely exosome-mediated 3'-5' exonucleolytic degradation, or deadenylation-dependent mRNA decaping and subsequent 5'-3' exonucleolytic degradation by XRN1. May also be involved in post-transcriptional maturation of mRNA poly(A) tails. PAN3 acts as a positive regulator for PAN activity, recruiting the catalytic subunit PAN2 to mRNA via its interaction with RNA and with PAB1. This Lodderomyces elongisporus (strain ATCC 11503 / CBS 2605 / JCM 1781 / NBRC 1676 / NRRL YB-4239) (Yeast) protein is PAN2-PAN3 deadenylation complex subunit PAN3.